The following is a 530-amino-acid chain: Phosphoenolpyruvate carboxykinase (ATP) (530 aa).

The substrate site is built by arginine 57, tyrosine 193, and lysine 199. ATP contacts are provided by residues lysine 199, histidine 218, and 234–242 (GLSGTGKTT). Residues lysine 199 and histidine 218 each contribute to the Mn(2+) site. Position 255 (aspartate 255) interacts with Mn(2+). Positions 283, 320, and 445 each coordinate ATP. Arginine 320 provides a ligand contact to substrate.

It belongs to the phosphoenolpyruvate carboxykinase (ATP) family. Requires Mn(2+) as cofactor.

The protein resides in the cytoplasm. The enzyme catalyses oxaloacetate + ATP = phosphoenolpyruvate + ADP + CO2. Its pathway is carbohydrate biosynthesis; gluconeogenesis. Involved in the gluconeogenesis. Catalyzes the conversion of oxaloacetate (OAA) to phosphoenolpyruvate (PEP) through direct phosphoryl transfer between the nucleoside triphosphate and OAA. The polypeptide is Phosphoenolpyruvate carboxykinase (ATP) (Leptospira interrogans serogroup Icterohaemorrhagiae serovar copenhageni (strain Fiocruz L1-130)).